Reading from the N-terminus, the 368-residue chain is MLDWDSILAYNTIKVVRIRDRRLGILHLIFMIAIISYVVIYSAIIKKGYLSIEEPVGSIRTSLWSPNQFNGNESYCKNNAKPYPYEKLDCVYYDDALALYPIGDDVGFTASTRIEISDQKANCSLMNPSCKFKTFNYSNVYLADIESFTVLIDHTMYAPSSQIQFNGGDLSGYVLDQNGNEIQLNESVNVIGVEGKPDVLEISKLLEFAGVNLDDPSLTNSSNPIRYDGCVLFVFIEYSNTFSYDLNKIKYVYSIKLVDDTIYNIPEVVILDDVNSRLYYKRHAIRLIFIQTGVIGSFNFQSLLLTLVSGLGLLTVSTLIVDQLAIRFLPQRKSYSSLKFQTTESFKMKKKIVNDDGEDKLYHNIEAL.

Topologically, residues 1–24 are cytoplasmic; the sequence is MLDWDSILAYNTIKVVRIRDRRLG. The chain crosses the membrane as a helical span at residues 25–45; it reads ILHLIFMIAIISYVVIYSAII. The Lumenal segment spans residues 46–368; that stretch reads KKGYLSIEEP…DKLYHNIEAL (323 aa). A pore-forming motif region spans residues 282–295; that stretch reads RHAIRLIFIQTGVI.

It belongs to the P2X receptor family.

The protein resides in the contractile vacuole membrane. Its function is as follows. P2X receptors are ligand-gated ion channels that play a role in intracellular calcium signaling. ATP does not evoke inward currents in p2xC. Not essential for osmoregulation. In Dictyostelium discoideum (Social amoeba), this protein is P2X receptor C (p2xC).